The following is a 362-amino-acid chain: S-adenosylmethionine:tRNA ribosyltransferase-isomerase (362 aa).

This sequence belongs to the QueA family. In terms of assembly, monomer.

The protein localises to the cytoplasm. The catalysed reaction is 7-aminomethyl-7-carbaguanosine(34) in tRNA + S-adenosyl-L-methionine = epoxyqueuosine(34) in tRNA + adenine + L-methionine + 2 H(+). It participates in tRNA modification; tRNA-queuosine biosynthesis. Its function is as follows. Transfers and isomerizes the ribose moiety from AdoMet to the 7-aminomethyl group of 7-deazaguanine (preQ1-tRNA) to give epoxyqueuosine (oQ-tRNA). The polypeptide is S-adenosylmethionine:tRNA ribosyltransferase-isomerase (Xanthobacter autotrophicus (strain ATCC BAA-1158 / Py2)).